Here is a 359-residue protein sequence, read N- to C-terminus: Peptide chain release factor 1 (359 aa).

Position 235 is an N5-methylglutamine (Gln-235).

This sequence belongs to the prokaryotic/mitochondrial release factor family. Methylated by PrmC. Methylation increases the termination efficiency of RF1.

It is found in the cytoplasm. Its function is as follows. Peptide chain release factor 1 directs the termination of translation in response to the peptide chain termination codons UAG and UAA. In Aromatoleum aromaticum (strain DSM 19018 / LMG 30748 / EbN1) (Azoarcus sp. (strain EbN1)), this protein is Peptide chain release factor 1.